The following is a 185-amino-acid chain: MAEAKALPRFKKLYQDNIRKALLEEFKYDNEMQIPRITKVVLNMGVGEATGDSKKPAVAAEDLAMIAGQKAVVTRARNSIATFKLREGMPIGAKVTLRQDRMYEFLDRLITIALPRVRDFRGLNPKSFDGRGNYAMGIKEHIVFPEINYDKVDQIWGMDIIVCTTAKTDDEARSLLRAFNFPFRQ.

This sequence belongs to the universal ribosomal protein uL5 family. Part of the 50S ribosomal subunit; part of the 5S rRNA/L5/L18/L25 subcomplex. Contacts the 5S rRNA and the P site tRNA. Forms a bridge to the 30S subunit in the 70S ribosome.

In terms of biological role, this is one of the proteins that bind and probably mediate the attachment of the 5S RNA into the large ribosomal subunit, where it forms part of the central protuberance. In the 70S ribosome it contacts protein S13 of the 30S subunit (bridge B1b), connecting the 2 subunits; this bridge is implicated in subunit movement. Contacts the P site tRNA; the 5S rRNA and some of its associated proteins might help stabilize positioning of ribosome-bound tRNAs. This is Large ribosomal subunit protein uL5 from Brucella abortus (strain S19).